The following is a 269-amino-acid chain: Aminodeoxychorismate lyase (269 aa).

Lysine 140 bears the N6-(pyridoxal phosphate)lysine mark.

This sequence belongs to the class-IV pyridoxal-phosphate-dependent aminotransferase family. As to quaternary structure, homodimer. Requires pyridoxal 5'-phosphate as cofactor.

The enzyme catalyses 4-amino-4-deoxychorismate = 4-aminobenzoate + pyruvate + H(+). It functions in the pathway cofactor biosynthesis; tetrahydrofolate biosynthesis; 4-aminobenzoate from chorismate: step 2/2. Its function is as follows. Involved in the biosynthesis of p-aminobenzoate (PABA), a precursor of tetrahydrofolate. Converts 4-amino-4-deoxychorismate into 4-aminobenzoate (PABA) and pyruvate. This Escherichia coli (strain K12) protein is Aminodeoxychorismate lyase (pabC).